A 583-amino-acid polypeptide reads, in one-letter code: MSIWKEAKDASGRIYYYNTLTKKSTWEKPKELISQEELLLRENGWKAAKTADGKVYYYNPTTRETSWTIPAFEKKVEPIAEQKHDTVSHAQVNGNRIALTAGEKQEPGRTINEEESQYANNSKLLNVRRRTKEEAEKEFITMLKENQVDSTWSFSRIISELGTRDPRYWMVDDDPLWKKEMFEKYLSNRSADQLLKEHNETSKFKEAFQKMLQNNSHIKYYTRWPTAKRLIADEPIYKHSVVNEKTKRQTFQDYIDTLIDTQKESKKKLKTQALKELREYLNGIITTSSSETFITWQQLLNHYVFDKSKRYMANRHFKVLTHEDVLNEYLKIVNTIENDLQNKLNELRLRNYTRDRIARDNFKSLLREVPIKIKANTRWSDIYPHIKSDPRFLHMLGRNGSSCLDLFLDFVDEQRMYIFAQRSIAQQTLIDQNFEWNDADSDEITKQNIEKVLENDRKFDKVDKEDISLIVDGLIKQRNEKIQQKLQNERRILEQKKHYFWLLLQRTYTKTGKPKPSTWDLASKELGESLEYKALGDEDNIRRQIFEDFKPESSAPTAESATANLTLTASKKRHLTPAVELDY.

2 WW domains span residues 1–31 (MSIW…KPKE) and 42–72 (ENGW…IPAF). 6 FF domains span residues 132–188 (KEEA…YLSN), 201–257 (TSKF…YIDT), 262–332 (QKES…YLKI), 354–413 (RDRI…FVDE), 427–488 (QTLI…KLQN), and 491–552 (RILE…FKPE). Phosphothreonine is present on T576.

It belongs to the PRPF40 family. In terms of assembly, interacts with CRM1, MSL5, PRP8, and the RNA polymerase II largest subunit (RPB1). MSL5, MUD2 and PRP40 interact to form the commitment complex 2 (CC2), a precursor of mature spliceosomes.

It localises to the nucleus. Functionally, required for pre-spliceosome formation, which is the first step of pre-mRNA splicing. This protein is associated with snRNP U1. Two commitment complexes, CC1 and CC2, have been defined in yeast. CC1 is a basal complex dependent only on the 5' splice site. CC2 is a complex of lower mobility and is dependent on a branchpoint as well as a 5' splice site region. This protein is involved in CC2 formation where it binds to the branchpoint binding protein MSL5, bridging the U1 snRNP-associated 5' splice site and the MSL5-associated branch point 3' intron splice site. This is Pre-mRNA-processing protein PRP40 (PRP40) from Saccharomyces cerevisiae (strain ATCC 204508 / S288c) (Baker's yeast).